A 322-amino-acid chain; its full sequence is Putative heme-binding peroxidase (322 aa).

Residue histidine 38 is the Proton acceptor of the active site. Histidine 162 is a binding site for heme b. Catalysis depends on tryptophan 178, which acts as the Tryptophan radical intermediate. Positions isoleucine 288–leucine 322 are disordered.

Belongs to the peroxidase family. Cytochrome c peroxidase subfamily. Heme b serves as cofactor.

Its function is as follows. Destroys radicals which are normally produced within the cells and which are toxic to biological systems. In Aspergillus fumigatus (strain ATCC MYA-4609 / CBS 101355 / FGSC A1100 / Af293) (Neosartorya fumigata), this protein is Putative heme-binding peroxidase.